We begin with the raw amino-acid sequence, 433 residues long: 3-phosphoshikimate 1-carboxyvinyltransferase (433 aa).

3-phosphoshikimate-binding residues include Lys15, Ser16, and Arg20. Lys15 provides a ligand contact to phosphoenolpyruvate. Residues Gly96 and Arg124 each contribute to the phosphoenolpyruvate site. 3-phosphoshikimate is bound by residues Ser169, Gln171, Ser195, Asp318, and Lys345. Gln171 provides a ligand contact to phosphoenolpyruvate. Asp318 functions as the Proton acceptor in the catalytic mechanism. 2 residues coordinate phosphoenolpyruvate: Arg349 and Arg393.

It belongs to the EPSP synthase family. In terms of assembly, monomer.

Its subcellular location is the cytoplasm. It carries out the reaction 3-phosphoshikimate + phosphoenolpyruvate = 5-O-(1-carboxyvinyl)-3-phosphoshikimate + phosphate. Its pathway is metabolic intermediate biosynthesis; chorismate biosynthesis; chorismate from D-erythrose 4-phosphate and phosphoenolpyruvate: step 6/7. Functionally, catalyzes the transfer of the enolpyruvyl moiety of phosphoenolpyruvate (PEP) to the 5-hydroxyl of shikimate-3-phosphate (S3P) to produce enolpyruvyl shikimate-3-phosphate and inorganic phosphate. The protein is 3-phosphoshikimate 1-carboxyvinyltransferase of Chlorobium luteolum (strain DSM 273 / BCRC 81028 / 2530) (Pelodictyon luteolum).